The sequence spans 710 residues: Polyribonucleotide nucleotidyltransferase (710 aa).

Mg(2+)-binding residues include D489 and D495. Residues 556–615 (PKIDTIKIDVDKIKVVIGKGGETIDKIIAETGVKIDIDDEGNVSIYSSDQAAINRTKEII) form the KH domain. The region spanning 625-693 (GEVYHAKVVR…EKGRVDASMK (69 aa)) is the S1 motif domain. The interval 691 to 710 (SMKALIPRPPKPEKKEEKHD) is disordered. The segment covering 700 to 710 (PKPEKKEEKHD) has biased composition (basic and acidic residues).

Mg(2+) is required as a cofactor.

Its subcellular location is the cytoplasm. The catalysed reaction is RNA(n+1) + phosphate = RNA(n) + a ribonucleoside 5'-diphosphate. Involved in mRNA degradation. Catalyzes the phosphorolysis of single-stranded polyribonucleotides processively in the 3'- to 5'-direction. The sequence is that of Polyribonucleotide nucleotidyltransferase from Streptococcus pyogenes serotype M6 (strain ATCC BAA-946 / MGAS10394).